Here is a 284-residue protein sequence, read N- to C-terminus: Bifunctional protein FolD (284 aa).

Residues 165–167 (GRS) and S190 each bind NADP(+).

This sequence belongs to the tetrahydrofolate dehydrogenase/cyclohydrolase family. Homodimer.

The enzyme catalyses (6R)-5,10-methylene-5,6,7,8-tetrahydrofolate + NADP(+) = (6R)-5,10-methenyltetrahydrofolate + NADPH. It catalyses the reaction (6R)-5,10-methenyltetrahydrofolate + H2O = (6R)-10-formyltetrahydrofolate + H(+). It participates in one-carbon metabolism; tetrahydrofolate interconversion. Its function is as follows. Catalyzes the oxidation of 5,10-methylenetetrahydrofolate to 5,10-methenyltetrahydrofolate and then the hydrolysis of 5,10-methenyltetrahydrofolate to 10-formyltetrahydrofolate. The protein is Bifunctional protein FolD of Streptococcus equi subsp. equi (strain 4047).